Here is a 173-residue protein sequence, read N- to C-terminus: Putative MgpC-like protein MPN_092 (173 aa).

The protein belongs to the MgpC family.

This chain is Putative MgpC-like protein MPN_092, found in Mycoplasma pneumoniae (strain ATCC 29342 / M129 / Subtype 1) (Mycoplasmoides pneumoniae).